The primary structure comprises 408 residues: Phosphoglycerate kinase (408 aa).

Residues 24 to 26, Arg39, 62 to 65, Arg121, and Arg161 contribute to the substrate site; these read DLN and HLGR. ATP-binding positions include Lys211, Gly307, Glu338, and 364–367; that span reads GGDS.

The protein belongs to the phosphoglycerate kinase family. As to quaternary structure, monomer.

The protein localises to the cytoplasm. The catalysed reaction is (2R)-3-phosphoglycerate + ATP = (2R)-3-phospho-glyceroyl phosphate + ADP. It participates in carbohydrate degradation; glycolysis; pyruvate from D-glyceraldehyde 3-phosphate: step 2/5. The protein is Phosphoglycerate kinase of Pseudarthrobacter chlorophenolicus (strain ATCC 700700 / DSM 12829 / CIP 107037 / JCM 12360 / KCTC 9906 / NCIMB 13794 / A6) (Arthrobacter chlorophenolicus).